The primary structure comprises 656 residues: DNA ligase (656 aa).

Residues 32-36 (DEEYD), 81-82 (SM), and glutamate 112 each bind NAD(+). Lysine 114 acts as the N6-AMP-lysine intermediate in catalysis. Positions 135, 169, 284, and 308 each coordinate NAD(+). Residues cysteine 402, cysteine 405, cysteine 418, and cysteine 423 each contribute to the Zn(2+) site. The BRCT domain occupies 577–656 (VQKTPFTGKT…DMWKMLKEGK (80 aa)).

This sequence belongs to the NAD-dependent DNA ligase family. LigA subfamily. Mg(2+) is required as a cofactor. Requires Mn(2+) as cofactor.

It carries out the reaction NAD(+) + (deoxyribonucleotide)n-3'-hydroxyl + 5'-phospho-(deoxyribonucleotide)m = (deoxyribonucleotide)n+m + AMP + beta-nicotinamide D-nucleotide.. DNA ligase that catalyzes the formation of phosphodiester linkages between 5'-phosphoryl and 3'-hydroxyl groups in double-stranded DNA using NAD as a coenzyme and as the energy source for the reaction. It is essential for DNA replication and repair of damaged DNA. The chain is DNA ligase from Nautilia profundicola (strain ATCC BAA-1463 / DSM 18972 / AmH).